The primary structure comprises 105 residues: Tyrosine-protein phosphatase 12 (105 aa).

Residues 1–105 (WRMIWEKRVE…NLRRIVRTEF (105 aa)) form the Tyrosine-protein phosphatase domain. Aspartate 84 is a substrate binding site.

It belongs to the protein-tyrosine phosphatase family.

It carries out the reaction O-phospho-L-tyrosyl-[protein] + H2O = L-tyrosyl-[protein] + phosphate. The chain is Tyrosine-protein phosphatase 12 (STY-12) from Styela plicata (Wrinkled sea squirt).